The following is a 501-amino-acid chain: Cytochrome P450 monooxygeanse terP (501 aa).

A helical membrane pass occupies residues 2 to 22 (PSLLLSLLLLQVPIICAWLLV). Cysteine 441 lines the heme pocket.

It belongs to the cytochrome P450 family. Heme serves as cofactor.

It is found in the membrane. The protein operates within secondary metabolite biosynthesis. In terms of biological role, cytochrome P450 monooxygeanse; part of the gene cluster that mediates the biosynthesis of terpendoles, indole-diterpene (IDT) mycotoxins including terpendole I, terpendole K, terpendole C, as well as the kinesin Eg5 inhibitor terpendole E. TerP has dual activity and is able to convert terpendole E to 13-desoxyterpendole I and paspaline to 13-desoxypaxilline. Terpendoles biosynthesis begins with the synthesis of geranylgeranyl diphosphate (GGPP) by a yet unidentified GGPP synthase. Condensation of indole-3-glycerol phosphate with GGPP by the prenyltransferase terC then forms 3-geranylgeranylindole (3-GGI), followed by epoxidation and cyclization of this intermediate (by the FAD-dependent monooxygeanse terM and the terpene cyclase terB) to form paspaline. The cytochrome monooxygenase terQ then hydroxylates paspalline at C-11 to yield terpendole E. The cytochrome monooxygenase terP converts terpendole E to 13-desoxyterpendole I, and terQ converts 13-desoxyterpendole I into terpendole I. TerF and terK are required for conversion of terpendole I to terpendole C which is further converted to terpendole K. This Tolypocladium album (Soil fungus) protein is Cytochrome P450 monooxygeanse terP.